The sequence spans 346 residues: Probable dolichyl-diphosphooligosaccharide--protein glycosyltransferase subunit 3B (346 aa).

An N-terminal signal peptide occupies residues 1 to 22; that stretch reads MALKSKLVSLLFLIATLSSTFA. Residues 23–189 are Lumenal-facing; that stretch reads ASFSDSDSDS…KVGPIQRPPL (167 aa). Asn-108 is a glycosylation site (N-linked (GlcNAc...) asparagine). The chain crosses the membrane as a helical span at residues 190-210; it reads LSKPQIGIIVALIVIATPFII. The Cytoplasmic segment spans residues 211 to 225; it reads KRVLKGETILHDTRL. Residues 226-246 form a helical membrane-spanning segment; the sequence is WLSGAIFIYFFSVAGTMHNII. At 247–277 the chain is on the lumenal side; sequence RKMPMFLQDRNDPNKLVFFYQGSGMQLGAEG. The chain crosses the membrane as a helical span at residues 278–298; it reads FAVGFLYTVVGLLLAFVTNVL. The Cytoplasmic segment spans residues 299 to 308; that stretch reads VRVKNITAQR. The helical transmembrane segment at 309-329 threads the bilayer; the sequence is LIMLLALFISFWAVKKVVYLD. Residues 330-346 lie on the Lumenal side of the membrane; the sequence is NWKTGYGIHPYWPSSWR.

This sequence belongs to the OST3/OST6 family. In terms of assembly, component of the oligosaccharyltransferase (OST) complex.

It is found in the endoplasmic reticulum membrane. Its function is as follows. Subunit of the oligosaccharyl transferase (OST) complex that catalyzes the initial transfer of a defined glycan (Glc(3)Man(9)GlcNAc(2) in eukaryotes) from the lipid carrier dolichol-pyrophosphate to an asparagine residue within an Asn-X-Ser/Thr consensus motif in nascent polypeptide chains, the first step in protein N-glycosylation. N-glycosylation occurs cotranslationally and the complex associates with the Sec61 complex at the channel-forming translocon complex that mediates protein translocation across the endoplasmic reticulum (ER). All subunits are required for a maximal enzyme activity. This Arabidopsis thaliana (Mouse-ear cress) protein is Probable dolichyl-diphosphooligosaccharide--protein glycosyltransferase subunit 3B (OST3B).